The primary structure comprises 408 residues: Succinylornithine transaminase (408 aa).

Lys-252 is subject to N6-(pyridoxal phosphate)lysine.

This sequence belongs to the class-III pyridoxal-phosphate-dependent aminotransferase family. AstC subfamily. Pyridoxal 5'-phosphate is required as a cofactor.

The catalysed reaction is N(2)-succinyl-L-ornithine + 2-oxoglutarate = N-succinyl-L-glutamate 5-semialdehyde + L-glutamate. Its pathway is amino-acid degradation; L-arginine degradation via AST pathway; L-glutamate and succinate from L-arginine: step 3/5. Its function is as follows. Catalyzes the transamination of N(2)-succinylornithine and alpha-ketoglutarate into N(2)-succinylglutamate semialdehyde and glutamate. Can also act as an acetylornithine aminotransferase. The protein is Succinylornithine transaminase of Salmonella typhimurium (strain LT2 / SGSC1412 / ATCC 700720).